Consider the following 275-residue polypeptide: Large ribosomal subunit protein uL2 (275 aa).

2 disordered regions span residues 38-59 (TRGSGRNNNGHITVRHRGGGHK) and 223-275 (VAMN…RKRK). Positions 50–59 (TVRHRGGGHK) are enriched in basic residues. Basic and acidic residues predominate over residues 229–244 (DHPHGGGEGRTGEARE).

It belongs to the universal ribosomal protein uL2 family. As to quaternary structure, part of the 50S ribosomal subunit. Forms a bridge to the 30S subunit in the 70S ribosome.

Functionally, one of the primary rRNA binding proteins. Required for association of the 30S and 50S subunits to form the 70S ribosome, for tRNA binding and peptide bond formation. It has been suggested to have peptidyltransferase activity; this is somewhat controversial. Makes several contacts with the 16S rRNA in the 70S ribosome. The chain is Large ribosomal subunit protein uL2 from Bordetella bronchiseptica (strain ATCC BAA-588 / NCTC 13252 / RB50) (Alcaligenes bronchisepticus).